The following is a 264-amino-acid chain: Phosphate import ATP-binding protein PstB 1 (264 aa).

The ABC transporter domain maps to 20 to 259 (LETRDLNIFY…PKIKLTEDYI (240 aa)). 52-59 (GASGSGKS) is a binding site for ATP.

It belongs to the ABC transporter superfamily. Phosphate importer (TC 3.A.1.7) family. As to quaternary structure, the complex is composed of two ATP-binding proteins (PstB), two transmembrane proteins (PstC and PstA) and a solute-binding protein (PstS).

The protein localises to the cell membrane. It catalyses the reaction phosphate(out) + ATP + H2O = ADP + 2 phosphate(in) + H(+). Part of the ABC transporter complex PstSACB involved in phosphate import. Responsible for energy coupling to the transport system. The sequence is that of Phosphate import ATP-binding protein PstB 1 from Ligilactobacillus salivarius (strain UCC118) (Lactobacillus salivarius).